The following is a 411-amino-acid chain: ATPase family AAA domain-containing protein 3C (411 aa).

An ATP-binding site is contributed by 177 to 184; it reads GPPGTGKT.

This sequence belongs to the AAA ATPase family.

The chain is ATPase family AAA domain-containing protein 3C (ATAD3C) from Homo sapiens (Human).